Consider the following 432-residue polypeptide: Phytase AppA (432 aa).

The first 22 residues, 1–22 (MKAILIPFLSLLIPLTPQSAFA), serve as a signal peptide directing secretion. Arg38 lines the 1D-myo-inositol hexakisphosphate pocket. The active-site Nucleophile is the His39. Residues 42–46 (RAPTK) and Arg114 each bind 1D-myo-inositol hexakisphosphate. 4 cysteine pairs are disulfide-bonded: Cys99-Cys130, Cys155-Cys430, Cys200-Cys210, and Cys404-Cys413. Residues Arg289 and 325–327 (HDT) contribute to the 1D-myo-inositol hexakisphosphate site. The Proton donor role is filled by Asp326.

It belongs to the histidine acid phosphatase family. Monomer.

It localises to the periplasm. It carries out the reaction 1D-myo-inositol hexakisphosphate + H2O = 1D-myo-inositol 1,2,3,4,5-pentakisphosphate + phosphate. The catalysed reaction is 1D-myo-inositol 1,2,3,4,5-pentakisphosphate + H2O = 1D-myo-inositol 2,3,4,5-tetrakisphosphate + phosphate. The enzyme catalyses 1D-myo-inositol 2,3,4,5-tetrakisphosphate + H2O = 1D-myo-inositol 2,4,5-triphosphate + phosphate. It catalyses the reaction 1D-myo-inositol 2,4,5-triphosphate + H2O = 1D-myo-inositol 2,5-bisphosphate + phosphate. It carries out the reaction 1D-myo-inositol 2,5-bisphosphate + H2O = 1D-myo-inositol 2-phosphate + phosphate. The catalysed reaction is GTP + H2O = GDP + phosphate + H(+). With respect to regulation, contains three consecutive and one non-consecutive disulfide bonds and shows a strong dependence on DsbC for its full activity. Competitively inhibited by tartaric acid and by sodium fluorid. Functionally, catalyzes the hydrolysis of phytate (or myo-inositol hexakisphosphate, an indigestible organic form of phosphorus that is found in many plant tissues) to myo-inositol and inorganic phosphate. Dephosphorylates phytate in a stereospecific way by sequential removal of phosphate groups to produce myo-inositol 2-monophosphate. Also shows phosphoanhydride phosphatase activity and hydrolyzes the distal phosphoryl residues of GTP, the 5'-beta-phosphoryl residue of the regulatory nucleotide ppGpp and tripolyphosphates. Does not split most phosphomonoesters with the exception of the synthetic substrate p-nitrophenyl phosphate (pNPP), 2,3-bisphosphoglycerate and fructose 1,6-bisphosphate. The protein is Phytase AppA of Escherichia coli (strain K12).